A 121-amino-acid chain; its full sequence is Small ribosomal subunit protein uS13 (121 aa).

A disordered region spans residues 88-121 (GMRHRRGLPVRGQHTKNNARTRKGKAVAIANKKK).

This sequence belongs to the universal ribosomal protein uS13 family. In terms of assembly, part of the 30S ribosomal subunit. Forms a loose heterodimer with protein S19. Forms two bridges to the 50S subunit in the 70S ribosome.

Functionally, located at the top of the head of the 30S subunit, it contacts several helices of the 16S rRNA. In the 70S ribosome it contacts the 23S rRNA (bridge B1a) and protein L5 of the 50S subunit (bridge B1b), connecting the 2 subunits; these bridges are implicated in subunit movement. Contacts the tRNAs in the A and P-sites. This Limosilactobacillus reuteri subsp. reuteri (strain JCM 1112) (Lactobacillus reuteri) protein is Small ribosomal subunit protein uS13.